A 4318-amino-acid polypeptide reads, in one-letter code: Cytoplasmic dynein 2 heavy chain 1 (4318 aa).

Positions 1–1658 (MPAEDARKEY…IMRMVDAEFQ (1658 aa)) are stem. Position 147-154 (147-154 (LKSLVRKQ)) interacts with ATP. 2 coiled-coil regions span residues 1328-1354 (DKAT…QRKW) and 1402-1431 (LRTT…RSIL). AAA regions lie at residues 1659-1883 (YTYE…VLRG), 1951-2171 (DAIR…RQGD), 2261-2515 (ASDF…WVLG), and 2623-2871 (TFAR…SSSV). 1697-1704 (GPAGTGKT) contributes to the ATP binding site. Residues 1959–1986 (EHNLVVMETQVKKALELYEQLRQRMGVV) are a coiled coil. Residues 1989–1996 (GPSGSGKS), 2301–2308 (GPDGCGKG), and 2661–2668 (GRSGVGRR) each bind ATP. Residues 2888–3176 (DVYRRKKQGV…YELEKEQETI (289 aa)) form a stalk region. Coiled coils occupy residues 2908–2989 (VAKL…AEIE) and 3423–3480 (QHEK…KTKE). AAA stretches follow at residues 3251-3487 (LSTE…TITQ) and 3699-3914 (MTFF…IIDR).

The protein belongs to the dynein heavy chain family. The cytoplasmic dynein complex 2 is probably composed by a heavy chain DYH1B homodimer and a number of light intermediate chains.

The protein resides in the cytoplasm. It is found in the cytoskeleton. It localises to the cilium axoneme. The protein localises to the cell membrane. Its function is as follows. May function as a motor for intraflagellar retrograde transport. Functions in cilia biogenesis. The chain is Cytoplasmic dynein 2 heavy chain 1 (DYH1B) from Tripneustes gratilla (Hawaian sea urchin).